The following is a 134-amino-acid chain: Mini-ribonuclease 3 (134 aa).

The active site involves Asp23.

It belongs to the MrnC RNase family. As to quaternary structure, homodimer. Mg(2+) serves as cofactor.

Its subcellular location is the cytoplasm. Functionally, involved in correct processing of both the 5' and 3' ends of 23S rRNA precursor. Processes 30S rRNA precursor transcript even in absence of ribonuclease 3 (Rnc); Rnc processes 30S rRNA into smaller rRNA precursors. The polypeptide is Mini-ribonuclease 3 (Brevibacillus brevis (strain 47 / JCM 6285 / NBRC 100599)).